Here is a 378-residue protein sequence, read N- to C-terminus: Ribosomal RNA large subunit methyltransferase G (378 aa).

Belongs to the methyltransferase superfamily. RlmG family.

Its subcellular location is the cytoplasm. It carries out the reaction guanosine(1835) in 23S rRNA + S-adenosyl-L-methionine = N(2)-methylguanosine(1835) in 23S rRNA + S-adenosyl-L-homocysteine + H(+). Specifically methylates the guanine in position 1835 (m2G1835) of 23S rRNA. In Escherichia coli O1:K1 / APEC, this protein is Ribosomal RNA large subunit methyltransferase G.